We begin with the raw amino-acid sequence, 315 residues long: Protoheme IX farnesyltransferase (315 aa).

Transmembrane regions (helical) follow at residues 32 to 52 (VMSLVVFTGLVGLVLAPGHMN), 53 to 73 (PVLAVISILCIAVGAGASGAL), 93 to 113 (IPAGIIAPNQVLAFGLTLSAF), 120 to 140 (LMVNWLAAALLAFTIFFYAVI), 153 to 173 (IVIGGAAGAFPPMIGWAAATG), 180 to 200 (LVLFMIIFLWTPPHFWALSLF), 226 to 246 (ALFYAVLMAPVGVLPWVMGFA), 249 to 269 (FYGVVSTLLGLAFVYYAWRLW), and 295 to 315 (IFAVLLFEALTFKLLAAFGVF).

This sequence belongs to the UbiA prenyltransferase family. Protoheme IX farnesyltransferase subfamily.

It localises to the cell inner membrane. It catalyses the reaction heme b + (2E,6E)-farnesyl diphosphate + H2O = Fe(II)-heme o + diphosphate. It functions in the pathway porphyrin-containing compound metabolism; heme O biosynthesis; heme O from protoheme: step 1/1. Its function is as follows. Converts heme B (protoheme IX) to heme O by substitution of the vinyl group on carbon 2 of heme B porphyrin ring with a hydroxyethyl farnesyl side group. This chain is Protoheme IX farnesyltransferase, found in Brucella suis (strain ATCC 23445 / NCTC 10510).